The chain runs to 139 residues: Putative general secretion pathway protein B (139 aa).

The helical transmembrane segment at 28-48 (IIYVICLLLICLWFAGMVLVG) threads the bilayer. Residues 93–139 (VEEEDDPGVAVENAPSSSEDEENTVEESEEKAGLRERVKNALNELER) are disordered. Over residues 110-121 (SEDEENTVEESE) the composition is skewed to acidic residues. Basic and acidic residues predominate over residues 122 to 139 (EKAGLRERVKNALNELER).

Its subcellular location is the cell membrane. Functionally, part of a cryptic operon that encodes proteins involved in type II secretion pathway in other organisms, but is not expressed in strain K12 under standard laboratory conditions. May play a regulatory role under conditions of derepressed gsp gene expression. The chain is Putative general secretion pathway protein B from Escherichia coli (strain K12).